The primary structure comprises 83 residues: MPAEKTQNVQDVFLNYIRKNKAPVTIFLVNGVKLQGIVTWFDNFSLLLRRDGHTQLVYKHAISTIMPASPVQLFEPTKEEVEA.

Residues 11 to 71 form the Sm domain; sequence DVFLNYIRKN…ISTIMPASPV (61 aa).

It belongs to the Hfq family. In terms of assembly, homohexamer.

RNA chaperone that binds small regulatory RNA (sRNAs) and mRNAs to facilitate mRNA translational regulation in response to envelope stress, environmental stress and changes in metabolite concentrations. Also binds with high specificity to tRNAs. The polypeptide is RNA-binding protein Hfq (Rhodospirillum rubrum (strain ATCC 11170 / ATH 1.1.1 / DSM 467 / LMG 4362 / NCIMB 8255 / S1)).